Consider the following 283-residue polypeptide: Putative Ig-like domain-containing protein ORF10 (283 aa).

The signal sequence occupies residues 1 to 55 (MIDKRNKKAVTHISTCLCHSSIPIYGDSPFLNTHRAAMDPRPLVLLLLLASHIST). Residues Asn75, Asn92, Asn121, Asn157, Asn179, Asn198, Asn223, and Asn229 are each glycosylated (N-linked (GlcNAc...) asparagine; by host). The Ig-like domain maps to 129–227 (QPLGQSIHHA…IDQQTNLTLT (99 aa)).

This Galliformes (FAdV-1) protein is Putative Ig-like domain-containing protein ORF10.